A 490-amino-acid polypeptide reads, in one-letter code: Bifunctional protein HldE (490 aa).

A ribokinase region spans residues 1-328 (MFSFDALLQA…LRRRILPHAS (328 aa)). Position 205 to 208 (205 to 208 (NRKE)) interacts with ATP. D275 is a catalytic residue. A cytidylyltransferase region spans residues 358–490 (FTNGCFDILH…LVARAREGQS (133 aa)).

It in the N-terminal section; belongs to the carbohydrate kinase PfkB family. The protein in the C-terminal section; belongs to the cytidylyltransferase family. As to quaternary structure, homodimer.

It carries out the reaction D-glycero-beta-D-manno-heptose 7-phosphate + ATP = D-glycero-beta-D-manno-heptose 1,7-bisphosphate + ADP + H(+). The catalysed reaction is D-glycero-beta-D-manno-heptose 1-phosphate + ATP + H(+) = ADP-D-glycero-beta-D-manno-heptose + diphosphate. It participates in nucleotide-sugar biosynthesis; ADP-L-glycero-beta-D-manno-heptose biosynthesis; ADP-L-glycero-beta-D-manno-heptose from D-glycero-beta-D-manno-heptose 7-phosphate: step 1/4. The protein operates within nucleotide-sugar biosynthesis; ADP-L-glycero-beta-D-manno-heptose biosynthesis; ADP-L-glycero-beta-D-manno-heptose from D-glycero-beta-D-manno-heptose 7-phosphate: step 3/4. Functionally, catalyzes the phosphorylation of D-glycero-D-manno-heptose 7-phosphate at the C-1 position to selectively form D-glycero-beta-D-manno-heptose-1,7-bisphosphate. Catalyzes the ADP transfer from ATP to D-glycero-beta-D-manno-heptose 1-phosphate, yielding ADP-D-glycero-beta-D-manno-heptose. The protein is Bifunctional protein HldE of Rhodopseudomonas palustris (strain TIE-1).